A 377-amino-acid polypeptide reads, in one-letter code: Putative F-box protein At3g13830 (377 aa).

The F-box domain maps to 6–52 (TTTMSTLPMVLVDEILSRVPITSLRSLRSTCKRWEAQSKTNLVGGKA).

The sequence is that of Putative F-box protein At3g13830 from Arabidopsis thaliana (Mouse-ear cress).